The primary structure comprises 398 residues: Riboflavin biosynthesis protein RibBA (398 aa).

The DHBP synthase stretch occupies residues 1 to 199; sequence MFHPIEEALD…IKDLIQYRYN (199 aa). Residues 26–27, D31, 138–142, and E162 each bind D-ribulose 5-phosphate; these read RE and RAGHT. E27 lines the Mg(2+) pocket. A Mg(2+)-binding site is contributed by H141. Residues 200–398 form a GTP cyclohydrolase II region; the sequence is LTTLVEREVD…MNKLGHLLHF (199 aa). 251-255 contacts GTP; that stretch reads RVHSE. The Zn(2+) site is built by C256, C267, and C269. GTP is bound by residues Q272, 294–296, and T316; that span reads EGR. D328 acts as the Proton acceptor; for GTP cyclohydrolase activity in catalysis. Residue R330 is the Nucleophile; for GTP cyclohydrolase activity of the active site. Positions 351 and 356 each coordinate GTP.

In the N-terminal section; belongs to the DHBP synthase family. The protein in the C-terminal section; belongs to the GTP cyclohydrolase II family. Mg(2+) serves as cofactor. The cofactor is Mn(2+). It depends on Zn(2+) as a cofactor.

The enzyme catalyses D-ribulose 5-phosphate = (2S)-2-hydroxy-3-oxobutyl phosphate + formate + H(+). It carries out the reaction GTP + 4 H2O = 2,5-diamino-6-hydroxy-4-(5-phosphoribosylamino)-pyrimidine + formate + 2 phosphate + 3 H(+). It functions in the pathway cofactor biosynthesis; riboflavin biosynthesis; 2-hydroxy-3-oxobutyl phosphate from D-ribulose 5-phosphate: step 1/1. It participates in cofactor biosynthesis; riboflavin biosynthesis; 5-amino-6-(D-ribitylamino)uracil from GTP: step 1/4. In terms of biological role, catalyzes the conversion of D-ribulose 5-phosphate to formate and 3,4-dihydroxy-2-butanone 4-phosphate. Catalyzes the conversion of GTP to 2,5-diamino-6-ribosylamino-4(3H)-pyrimidinone 5'-phosphate (DARP), formate and pyrophosphate. This Bacillus subtilis (strain 168) protein is Riboflavin biosynthesis protein RibBA.